We begin with the raw amino-acid sequence, 304 residues long: Probable aquaporin NIP5-1 (304 aa).

2 helical membrane passes run 80–100 and 106–126; these read LGAE…GPIV and GAET…IIIL. An NPA 1 motif is present at residues 137–139; sequence NPS. Transmembrane regions (helical) follow at residues 157-177, 195-215, and 219-239; these read AYIA…KGVF, AFAL…AVAT, and AVGE…ILVA. Residues 248-250 carry the NPA 2 motif; it reads NPV. A helical membrane pass occupies residues 266-286; it reads WVYLVAPTLGAISGAAVYTGV. Ser-301 bears the Phosphoserine mark.

This sequence belongs to the MIP/aquaporin (TC 1.A.8) family. NIP (TC 1.A.8.12) subfamily. In terms of tissue distribution, expressed in rosette leaves.

Its subcellular location is the cell membrane. Boric acid transporter. Low water transport activity. Plays an important role as plasma membrane boric acid channel for the boron uptake required for plant growth and development under boron limitation. This is Probable aquaporin NIP5-1 (NIP5-1) from Arabidopsis thaliana (Mouse-ear cress).